We begin with the raw amino-acid sequence, 106 residues long: MGMNQQRLTQVILAPIVSEKSNVLAEKRNQMTFKVLANAAKPEIKAAVELLFGVQVASVTTVTTKGKTKRFGRTLGRRSDVKKAYVSLAAGQELDLEAAAAAADKE.

This sequence belongs to the universal ribosomal protein uL23 family. As to quaternary structure, part of the 50S ribosomal subunit. Contacts protein L29, and trigger factor when it is bound to the ribosome.

In terms of biological role, one of the early assembly proteins it binds 23S rRNA. One of the proteins that surrounds the polypeptide exit tunnel on the outside of the ribosome. Forms the main docking site for trigger factor binding to the ribosome. The chain is Large ribosomal subunit protein uL23 from Neisseria meningitidis serogroup C / serotype 2a (strain ATCC 700532 / DSM 15464 / FAM18).